A 492-amino-acid polypeptide reads, in one-letter code: AAA-ATPase At3g28520 (492 aa).

Residues 7-25 form a helical membrane-spanning segment; the sequence is IWGFTSTTMASIMFLWPMY. 249 to 256 contributes to the ATP binding site; the sequence is GPPGTGKS. Disordered stretches follow at residues 313 to 334 and 462 to 492; these read KKKK…LKRV and KIEK…MVTK. 2 stretches are compositionally biased toward basic and acidic residues: residues 323-332 and 462-484; these read EEKKEAENLK and KIEK…EKQN.

Belongs to the AAA ATPase family. BCS1 subfamily. Mg(2+) is required as a cofactor.

It is found in the membrane. It catalyses the reaction ATP + H2O = ADP + phosphate + H(+). The sequence is that of AAA-ATPase At3g28520 from Arabidopsis thaliana (Mouse-ear cress).